The sequence spans 517 residues: GMP synthase [glutamine-hydrolyzing] (517 aa).

The Glutamine amidotransferase type-1 domain occupies 11–202; the sequence is KIIVLDFGSQ…AFNVCDAKAN (192 aa). Cys-88 functions as the Nucleophile in the catalytic mechanism. Residues His-176 and Glu-178 contribute to the active site. The region spanning 203–392 is the GMPS ATP-PPase domain; that stretch reads WTMDDFIEMQ…LGIPHDLVWR (190 aa). 230–236 serves as a coordination point for ATP; it reads SGGVDSS.

As to quaternary structure, homodimer.

The enzyme catalyses XMP + L-glutamine + ATP + H2O = GMP + L-glutamate + AMP + diphosphate + 2 H(+). Its pathway is purine metabolism; GMP biosynthesis; GMP from XMP (L-Gln route): step 1/1. Its function is as follows. Catalyzes the synthesis of GMP from XMP. This chain is GMP synthase [glutamine-hydrolyzing], found in Lactobacillus gasseri (strain ATCC 33323 / DSM 20243 / BCRC 14619 / CIP 102991 / JCM 1131 / KCTC 3163 / NCIMB 11718 / NCTC 13722 / AM63).